Here is a 540-residue protein sequence, read N- to C-terminus: Bifunctional purine biosynthesis protein PurH (540 aa).

The region spanning 1 to 144 (MKRALISVYD…KNYQDVGVVV (144 aa)) is the MGS-like domain. The segment at 204–224 (ETAPERPIGADPGPQKPAAPS) is disordered.

It belongs to the PurH family.

It catalyses the reaction (6R)-10-formyltetrahydrofolate + 5-amino-1-(5-phospho-beta-D-ribosyl)imidazole-4-carboxamide = 5-formamido-1-(5-phospho-D-ribosyl)imidazole-4-carboxamide + (6S)-5,6,7,8-tetrahydrofolate. It carries out the reaction IMP + H2O = 5-formamido-1-(5-phospho-D-ribosyl)imidazole-4-carboxamide. It functions in the pathway purine metabolism; IMP biosynthesis via de novo pathway; 5-formamido-1-(5-phospho-D-ribosyl)imidazole-4-carboxamide from 5-amino-1-(5-phospho-D-ribosyl)imidazole-4-carboxamide (10-formyl THF route): step 1/1. The protein operates within purine metabolism; IMP biosynthesis via de novo pathway; IMP from 5-formamido-1-(5-phospho-D-ribosyl)imidazole-4-carboxamide: step 1/1. The chain is Bifunctional purine biosynthesis protein PurH from Symbiobacterium thermophilum (strain DSM 24528 / JCM 14929 / IAM 14863 / T).